Here is a 362-residue protein sequence, read N- to C-terminus: Adenosine deaminase (362 aa).

Zn(2+)-binding residues include His-19 and His-21. 3 residues coordinate substrate: His-21, Asp-23, and Gly-181. His-208 lines the Zn(2+) pocket. Glu-211 (proton donor) is an active-site residue. Position 300 (Asp-300) interacts with Zn(2+).

The protein belongs to the metallo-dependent hydrolases superfamily. Adenosine and AMP deaminases family. Adenosine deaminase subfamily. Zn(2+) serves as cofactor.

The catalysed reaction is adenosine + H2O + H(+) = inosine + NH4(+). The enzyme catalyses 2'-deoxyadenosine + H2O + H(+) = 2'-deoxyinosine + NH4(+). Catalyzes the hydrolytic deamination of adenosine and 2-deoxyadenosine. This chain is Adenosine deaminase, found in Mycobacteroides abscessus (strain ATCC 19977 / DSM 44196 / CCUG 20993 / CIP 104536 / JCM 13569 / NCTC 13031 / TMC 1543 / L948) (Mycobacterium abscessus).